Here is a 444-residue protein sequence, read N- to C-terminus: Cytokine receptor-like factor 3 (444 aa).

Residues 1 to 65 (MSIEAEALLQ…QELQTAVSRL (65 aa)) adopt a coiled-coil conformation. The Fibronectin type-III domain occupies 177–270 (PPVQIEELVE…PQTGYTTLAP (94 aa)).

Belongs to the cytokine receptor-like factor 3 family.

Its subcellular location is the cytoplasm. Its function is as follows. May play a role in the negative regulation of cell cycle progression. The protein is Cytokine receptor-like factor 3 (crlf3) of Danio rerio (Zebrafish).